The sequence spans 246 residues: 3-deoxy-manno-octulosonate cytidylyltransferase (246 aa).

Belongs to the KdsB family.

The protein resides in the cytoplasm. The enzyme catalyses 3-deoxy-alpha-D-manno-oct-2-ulosonate + CTP = CMP-3-deoxy-beta-D-manno-octulosonate + diphosphate. It participates in nucleotide-sugar biosynthesis; CMP-3-deoxy-D-manno-octulosonate biosynthesis; CMP-3-deoxy-D-manno-octulosonate from 3-deoxy-D-manno-octulosonate and CTP: step 1/1. It functions in the pathway bacterial outer membrane biogenesis; lipopolysaccharide biosynthesis. Its function is as follows. Activates KDO (a required 8-carbon sugar) for incorporation into bacterial lipopolysaccharide in Gram-negative bacteria. The sequence is that of 3-deoxy-manno-octulosonate cytidylyltransferase from Chloroherpeton thalassium (strain ATCC 35110 / GB-78).